The chain runs to 211 residues: MGLVFLGPPGSGKGTISKIISNEFKYHHISTGDLFRENILNSTTLGKEIKKIVEKGELVPDQITIKIVKDKIKAIKKNDNFILDGFPRNICQAEALDKFLPNVKIINFLINEELVIKRLSGRRICKSCNNIFNIYTLATKKNGICDVCKGDLYQREDDKEECLKTRLKEYKLQTKPLIEFYSKCSRLNNVDASVEIDEIKKKIIKIMLKKN.

Gly-10–Thr-15 is a binding site for ATP. An NMP region spans residues Ser-30–Val-59. AMP-binding positions include Thr-31, Arg-36, Glu-57–Val-59, Gly-85–Arg-88, and Gln-92. Positions Gly-121–Asp-158 are LID. ATP is bound at residue Arg-122. Residues Cys-125 and Cys-128 each contribute to the Zn(2+) site. Ile-131–Phe-132 lines the ATP pocket. The Zn(2+) site is built by Cys-145 and Cys-148. The AMP site is built by Arg-155 and Arg-166. Residue Val-194 participates in ATP binding.

The protein belongs to the adenylate kinase family. As to quaternary structure, monomer.

It localises to the cytoplasm. It catalyses the reaction AMP + ATP = 2 ADP. The protein operates within purine metabolism; AMP biosynthesis via salvage pathway; AMP from ADP: step 1/1. In terms of biological role, catalyzes the reversible transfer of the terminal phosphate group between ATP and AMP. Plays an important role in cellular energy homeostasis and in adenine nucleotide metabolism. This is Adenylate kinase from Borrelia garinii subsp. bavariensis (strain ATCC BAA-2496 / DSM 23469 / PBi) (Borreliella bavariensis).